Consider the following 145-residue polypeptide: Putative antiporter subunit mnhG2 (145 aa).

A run of 3 helical transmembrane segments spans residues 11–31 (IAAVMLLLGSFIALISAIGIV), 51–71 (VLLTLIGVLIYFIVNTGFFSV), and 72–92 (RLLLSLVFINLTSPVGMHLVA).

Belongs to the CPA3 antiporters (TC 2.A.63) subunit G family. May form a heterooligomeric complex that consists of seven subunits: mnhA2, mnhB2, mnhC2, mnhD2, mnhE2, mnhF2 and mnhG2.

It is found in the cell membrane. In Staphylococcus aureus (strain COL), this protein is Putative antiporter subunit mnhG2 (mnhG2).